A 56-amino-acid polypeptide reads, in one-letter code: LAAVSVDCSEYPKPACTMEQRPLCGSDNKTYGNKCNFCNAVVESNGTLTLSHFGKC.

Residues 6 to 56 (VDCSEYPKPACTMEQRPLCGSDNKTYGNKCNFCNAVVESNGTLTLSHFGKC) form the Kazal-like domain. Cystine bridges form between C8–C38, C16–C35, and C24–C56. The N-linked (GlcNAc...) asparagine glycan is linked to N45.

Its subcellular location is the secreted. This chain is Ovomucoid, found in Afropavo congensis (Congo peafowl).